Here is a 357-residue protein sequence, read N- to C-terminus: Protein RecA (357 aa).

ATP is bound at residue 74–81; sequence GPESSGKT.

Belongs to the RecA family.

Its subcellular location is the cytoplasm. Can catalyze the hydrolysis of ATP in the presence of single-stranded DNA, the ATP-dependent uptake of single-stranded DNA by duplex DNA, and the ATP-dependent hybridization of homologous single-stranded DNAs. It interacts with LexA causing its activation and leading to its autocatalytic cleavage. The polypeptide is Protein RecA (Bordetella petrii (strain ATCC BAA-461 / DSM 12804 / CCUG 43448)).